A 256-amino-acid polypeptide reads, in one-letter code: Leucyl/phenylalanyl-tRNA--protein transferase (256 aa).

Positions 1–21 (MIPWLPDDSDSAPFPPTRLAL) are disordered.

It belongs to the L/F-transferase family.

The protein localises to the cytoplasm. It carries out the reaction N-terminal L-lysyl-[protein] + L-leucyl-tRNA(Leu) = N-terminal L-leucyl-L-lysyl-[protein] + tRNA(Leu) + H(+). The catalysed reaction is N-terminal L-arginyl-[protein] + L-leucyl-tRNA(Leu) = N-terminal L-leucyl-L-arginyl-[protein] + tRNA(Leu) + H(+). The enzyme catalyses L-phenylalanyl-tRNA(Phe) + an N-terminal L-alpha-aminoacyl-[protein] = an N-terminal L-phenylalanyl-L-alpha-aminoacyl-[protein] + tRNA(Phe). Functions in the N-end rule pathway of protein degradation where it conjugates Leu, Phe and, less efficiently, Met from aminoacyl-tRNAs to the N-termini of proteins containing an N-terminal arginine or lysine. The polypeptide is Leucyl/phenylalanyl-tRNA--protein transferase (Leptothrix cholodnii (strain ATCC 51168 / LMG 8142 / SP-6) (Leptothrix discophora (strain SP-6))).